We begin with the raw amino-acid sequence, 494 residues long: 4-trimethylaminobutyraldehyde dehydrogenase (494 aa).

Ser2 bears the N-acetylserine; in 4-trimethylaminobutyraldehyde dehydrogenase, N-terminally processed mark. An N6-acetyllysine; alternate modification is found at Lys30. Lys30 carries the N6-succinyllysine; alternate modification. Lys59 carries the N6-succinyllysine modification. NAD(+) is bound by residues Lys180 and 232 to 236 (GSVPT). The Proton acceptor role is filled by Glu254. The active-site Nucleophile is the Cys288. Lys298 carries the N6-acetyllysine modification. Lys303 carries the N6-acetyllysine; alternate modification. The residue at position 303 (Lys303) is an N6-succinyllysine; alternate. Lys344 carries the post-translational modification N6-acetyllysine. Glu391 provides a ligand contact to NAD(+).

Belongs to the aldehyde dehydrogenase family. As to quaternary structure, homotetramer. As to expression, detected in brain (at protein level). High expression in adult liver, skeletal muscle, and kidney. Low levels in heart, pancreas, lung and brain. Expressed in all regions of the brain. Expression levels are variable in the different brain areas, with the highest levels in the spinal cord and the lowest in the occipital pole.

It localises to the cytoplasm. Its subcellular location is the cytosol. The enzyme catalyses 4-(trimethylamino)butanal + NAD(+) + H2O = 4-(trimethylamino)butanoate + NADH + 2 H(+). The catalysed reaction is an aldehyde + NAD(+) + H2O = a carboxylate + NADH + 2 H(+). It catalyses the reaction 4-aminobutanal + NAD(+) + H2O = 4-aminobutanoate + NADH + 2 H(+). It carries out the reaction formaldehyde + NAD(+) + H2O = formate + NADH + 2 H(+). The enzyme catalyses acetaldehyde + NAD(+) + H2O = acetate + NADH + 2 H(+). The catalysed reaction is imidazole-4-acetaldehyde + NAD(+) + H2O = imidazole-4-acetate + NADH + 2 H(+). It catalyses the reaction acrolein + NAD(+) + H2O = acrylate + NADH + 2 H(+). It carries out the reaction (5-hydroxyindol-3-yl)acetaldehyde + NAD(+) + H2O = (5-hydroxyindol-3-yl)acetate + NADH + 2 H(+). The enzyme catalyses 3,4-dihydroxyphenylacetaldehyde + NAD(+) + H2O = 3,4-dihydroxyphenylacetate + NADH + 2 H(+). The catalysed reaction is spermine monoaldehyde + NAD(+) + H2O = N-(2-carboxyethyl)spermidine + NADH + 2 H(+). It catalyses the reaction propanal + NAD(+) + H2O = propanoate + NADH + 2 H(+). It carries out the reaction butanal + NAD(+) + H2O = butanoate + NADH + 2 H(+). The enzyme catalyses pentanal + NAD(+) + H2O = pentanoate + NADH + 2 H(+). The catalysed reaction is hexanal + NAD(+) + H2O = hexanoate + NADH + 2 H(+). It functions in the pathway amine and polyamine biosynthesis; carnitine biosynthesis. Converts gamma-trimethylaminobutyraldehyde into gamma-butyrobetaine with high efficiency (in vitro). Can catalyze the irreversible oxidation of a broad range of aldehydes to the corresponding acids in an NAD-dependent reaction, but with low efficiency. Catalyzes the oxidation of aldehydes arising from biogenic amines and polyamines. The polypeptide is 4-trimethylaminobutyraldehyde dehydrogenase (ALDH9A1) (Homo sapiens (Human)).